We begin with the raw amino-acid sequence, 567 residues long: Potassium-transporting ATPase potassium-binding subunit (567 aa).

11 helical membrane-spanning segments follow: residues 5 to 25, 64 to 84, 136 to 156, 179 to 199, 254 to 274, 285 to 305, 332 to 352, 359 to 376, 421 to 441, 486 to 506, and 529 to 549; these read GWIQILVFCGIIILLVKPLGG, TTYAASLLLFNLAGFLLLYML, GLTVQNFVSAATGVAIAIALI, LYVLLPLCIILTLAFVSLGVP, ISNMIQMVAIFAIGASLTNVF, WAIFAAMGILFVAGVAICYWA, IAMSALFAVVTTAASCGAVIA, ALGGMIPMINMMLGEIII, MLAVLCLPLSILGFTAIASVI, ITIGLAMLMGRFLVILPAMAI, and LFVGLLIGVILVVGGLIFFPA.

It belongs to the KdpA family. As to quaternary structure, the system is composed of three essential subunits: KdpA, KdpB and KdpC.

Its subcellular location is the cell inner membrane. Part of the high-affinity ATP-driven potassium transport (or Kdp) system, which catalyzes the hydrolysis of ATP coupled with the electrogenic transport of potassium into the cytoplasm. This subunit binds the periplasmic potassium ions and delivers the ions to the membrane domain of KdpB through an intramembrane tunnel. The protein is Potassium-transporting ATPase potassium-binding subunit of Brucella anthropi (strain ATCC 49188 / DSM 6882 / CCUG 24695 / JCM 21032 / LMG 3331 / NBRC 15819 / NCTC 12168 / Alc 37) (Ochrobactrum anthropi).